Here is a 268-residue protein sequence, read N- to C-terminus: NH(3)-dependent NAD(+) synthetase (268 aa).

Position 46-53 (46-53 (GVSGGQDS)) interacts with ATP. Mg(2+) is bound at residue D52. Residue R140 coordinates deamido-NAD(+). Position 160 (T160) interacts with ATP. E165 lines the Mg(2+) pocket. Deamido-NAD(+)-binding residues include K173 and D180. K189 is a binding site for ATP. 260-261 (HK) contributes to the deamido-NAD(+) binding site.

Belongs to the NAD synthetase family. As to quaternary structure, homodimer.

It catalyses the reaction deamido-NAD(+) + NH4(+) + ATP = AMP + diphosphate + NAD(+) + H(+). The protein operates within cofactor biosynthesis; NAD(+) biosynthesis; NAD(+) from deamido-NAD(+) (ammonia route): step 1/1. Its function is as follows. Catalyzes the ATP-dependent amidation of deamido-NAD to form NAD. Uses ammonia as a nitrogen source. The chain is NH(3)-dependent NAD(+) synthetase from Buchnera aphidicola subsp. Acyrthosiphon pisum (strain Tuc7).